The following is a 431-amino-acid chain: UPF0597 protein BVU_2091 (431 aa).

Belongs to the UPF0597 family.

This is UPF0597 protein BVU_2091 from Phocaeicola vulgatus (strain ATCC 8482 / DSM 1447 / JCM 5826 / CCUG 4940 / NBRC 14291 / NCTC 11154) (Bacteroides vulgatus).